The chain runs to 159 residues: Phosphopantetheine adenylyltransferase (159 aa).

Residue Thr-10 coordinates substrate. ATP is bound by residues 10–11 (TF) and His-18. Substrate is bound by residues Lys-42, Met-74, and Arg-88. Residues 89 to 91 (GLR), Glu-99, and 124 to 130 (WSFISSS) contribute to the ATP site.

Belongs to the bacterial CoaD family. Homohexamer. Mg(2+) is required as a cofactor.

The protein localises to the cytoplasm. It carries out the reaction (R)-4'-phosphopantetheine + ATP + H(+) = 3'-dephospho-CoA + diphosphate. The protein operates within cofactor biosynthesis; coenzyme A biosynthesis; CoA from (R)-pantothenate: step 4/5. In terms of biological role, reversibly transfers an adenylyl group from ATP to 4'-phosphopantetheine, yielding dephospho-CoA (dPCoA) and pyrophosphate. This Escherichia coli (strain UTI89 / UPEC) protein is Phosphopantetheine adenylyltransferase.